A 394-amino-acid polypeptide reads, in one-letter code: HORMA domain-containing protein 1 (394 aa).

The 203-residue stretch at histidine 24–valine 226 folds into the HORMA domain. Positions lysine 252–isoleucine 394 are disordered. Residues isoleucine 253–lysine 282 are compositionally biased toward basic and acidic residues. Composition is skewed to polar residues over residues leucine 310–threonine 324 and lysine 343–lysine 352. The segment covering glutamine 362 to aspartate 374 has biased composition (basic and acidic residues). Position 376 is a phosphoserine (serine 376). The Nuclear localization signal motif lies at lysine 383 to lysine 386.

Interacts with HORMAD2. Interacts with IHO1. Post-translationally, phosphorylated at Ser-377 in a SPO11-dependent manner.

The protein localises to the nucleus. Its subcellular location is the chromosome. Plays a key role in meiotic progression. Regulates 3 different functions during meiosis: ensures that sufficient numbers of processed DNA double-strand breaks (DSBs) are available for successful homology search by increasing the steady-state numbers of single-stranded DSB ends. Promotes synaptonemal-complex formation independently of its role in homology search. Plays a key role in the male mid-pachytene checkpoint and the female meiotic prophase checkpoint: required for efficient build-up of ATR activity on unsynapsed chromosome regions, a process believed to form the basis of meiotic silencing of unsynapsed chromatin (MSUC) and meiotic prophase quality control in both sexes. This is HORMA domain-containing protein 1 (HORMAD1) from Macaca fascicularis (Crab-eating macaque).